The primary structure comprises 725 residues: Homeobox-leucine zipper protein HDG3 (725 aa).

Residues Met1–Arg74 are disordered. Residues Asn11–Ser40 are compositionally biased toward low complexity. Polar residues predominate over residues Asp46–Ala64. Residues Pro65–Arg74 show a composition bias toward basic residues. Residues Lys68–Gln127 constitute a DNA-binding region (homeobox). Residues Gln117–Leu201 are a coiled coil. The START domain occupies Asp243 to Ser475.

The protein belongs to the HD-ZIP homeobox family. Class IV subfamily. In terms of assembly, interacts with AIL7/PLT7, ANT, BBM and AIL1. In terms of tissue distribution, expressed in siliques.

It localises to the nucleus. Probable transcription factor. Seems to promote cell differentiation. The sequence is that of Homeobox-leucine zipper protein HDG3 from Arabidopsis thaliana (Mouse-ear cress).